We begin with the raw amino-acid sequence, 142 residues long: Deoxyuridine 5'-triphosphate nucleotidohydrolase (142 aa).

Substrate contacts are provided by residues 62–64 (RSG), Asn-75, and 79–81 (TID).

Belongs to the dUTPase family. The cofactor is Mg(2+).

It catalyses the reaction dUTP + H2O = dUMP + diphosphate + H(+). The protein operates within pyrimidine metabolism; dUMP biosynthesis; dUMP from dCTP (dUTP route): step 2/2. In terms of biological role, this enzyme is involved in nucleotide metabolism: it produces dUMP, the immediate precursor of thymidine nucleotides and it decreases the intracellular concentration of dUTP so that uracil cannot be incorporated into DNA. The sequence is that of Deoxyuridine 5'-triphosphate nucleotidohydrolase from Picosynechococcus sp. (strain ATCC 27264 / PCC 7002 / PR-6) (Agmenellum quadruplicatum).